The following is a 145-amino-acid chain: Large ribosomal subunit protein uL11 (145 aa).

This sequence belongs to the universal ribosomal protein uL11 family. Part of the ribosomal stalk of the 50S ribosomal subunit. Interacts with L10 and the large rRNA to form the base of the stalk. L10 forms an elongated spine to which L12 dimers bind in a sequential fashion forming a multimeric L10(L12)X complex. Post-translationally, one or more lysine residues are methylated.

Functionally, forms part of the ribosomal stalk which helps the ribosome interact with GTP-bound translation factors. This chain is Large ribosomal subunit protein uL11, found in Aquifex aeolicus (strain VF5).